Here is a 190-residue protein sequence, read N- to C-terminus: Potassium-transporting ATPase KdpC subunit (190 aa).

The chain crosses the membrane as a helical span at residues threonine 10–glycine 30.

The protein belongs to the KdpC family. As to quaternary structure, the system is composed of three essential subunits: KdpA, KdpB and KdpC.

It is found in the cell inner membrane. In terms of biological role, part of the high-affinity ATP-driven potassium transport (or Kdp) system, which catalyzes the hydrolysis of ATP coupled with the electrogenic transport of potassium into the cytoplasm. This subunit acts as a catalytic chaperone that increases the ATP-binding affinity of the ATP-hydrolyzing subunit KdpB by the formation of a transient KdpB/KdpC/ATP ternary complex. In Escherichia coli (strain 55989 / EAEC), this protein is Potassium-transporting ATPase KdpC subunit.